Consider the following 155-residue polypeptide: Interleukin-2 (155 aa).

The signal sequence occupies residues M1–S20. An O-linked (GalNAc...) threonine glycan is attached at T23. C77 and C125 form a disulfide bridge.

This sequence belongs to the IL-2 family.

The protein localises to the secreted. In terms of biological role, cytokine produced by activated CD4-positive helper T-cells and to a lesser extend activated CD8-positive T-cells and natural killer (NK) cells that plays pivotal roles in the immune response and tolerance. Binds to a receptor complex composed of either the high-affinity trimeric IL-2R (IL2RA/CD25, IL2RB/CD122 and IL2RG/CD132) or the low-affinity dimeric IL-2R (IL2RB and IL2RG). Interaction with the receptor leads to oligomerization and conformation changes in the IL-2R subunits resulting in downstream signaling starting with phosphorylation of JAK1 and JAK3. In turn, JAK1 and JAK3 phosphorylate the receptor to form a docking site leading to the phosphorylation of several substrates including STAT5. This process leads to activation of several pathways including STAT, phosphoinositide-3-kinase/PI3K and mitogen-activated protein kinase/MAPK pathways. Functions as a T-cell growth factor and can increase NK-cell cytolytic activity as well. Promotes strong proliferation of activated B-cells and subsequently immunoglobulin production. Plays a pivotal role in regulating the adaptive immune system by controlling the survival and proliferation of regulatory T-cells, which are required for the maintenance of immune tolerance. Moreover, participates in the differentiation and homeostasis of effector T-cell subsets, including Th1, Th2, Th17 as well as memory CD8-positive T-cells. The chain is Interleukin-2 (IL2) from Dasypus novemcinctus (Nine-banded armadillo).